We begin with the raw amino-acid sequence, 77 residues long: Acyl carrier protein (77 aa).

The Carrier domain maps to 2 to 77 (STVEERVKKI…DAIDYIVAHT (76 aa)). Serine 37 carries the post-translational modification O-(pantetheine 4'-phosphoryl)serine.

The protein belongs to the acyl carrier protein (ACP) family. In terms of processing, 4'-phosphopantetheine is transferred from CoA to a specific serine of apo-ACP by AcpS. This modification is essential for activity because fatty acids are bound in thioester linkage to the sulfhydryl of the prosthetic group.

The protein localises to the cytoplasm. Its pathway is lipid metabolism; fatty acid biosynthesis. In terms of biological role, carrier of the growing fatty acid chain in fatty acid biosynthesis. The polypeptide is Acyl carrier protein (Marinobacter nauticus (strain ATCC 700491 / DSM 11845 / VT8) (Marinobacter aquaeolei)).